The following is a 299-amino-acid chain: MAELGLNEHHQNEVINYMRFARSKRGLRLKTVDSCFQDLKESRLVEDTFTIDEVSEVLNGLQAVVHSEVESELINTAYTNVLLLRQLFAQAEKWYLKLQTDISELENRELLEQVAEFEKAEITSSNKKPILDVTKPKLAPLNEGGTAELLNKEILRLQEENEKLKSRLKTIEIQATNALDEKSKLEKALQDLQLDQGNQKDFIKAQDLSNLENTVAALKSEFQKTLNDKTENQKSLEENLATAKHDLLRVQEQLHMAEKELEKKFQQTAAYRNMKEILTKKNDQIKDLRKRLAQYEPED.

A coiled-coil region spans residues 96 to 296; the sequence is LKLQTDISEL…DLRKRLAQYE (201 aa). The interaction with BSS9 stretch occupies residues 145-299; it reads GTAELLNKEI…KRLAQYEPED (155 aa).

This sequence belongs to the LZTFL1 family. In terms of assembly, self-associates. Interacts with BBS9; the interaction mediates the association of LZTL1 with the BBsome complex and regulates BBSome ciliary trafficking. In terms of tissue distribution, expressed in prostate, ovary, stomach, pancreas, esophagus, breast, liver, bladder, kidney, thyroid, colon and lung (at protein level). Down-regulated in multiple primary tumors (at protein level). Detected in testis, heart, skeletal muscle, thymus, spleen, small intestine, and peripheral blood leukocytes.

The protein resides in the cytoplasm. Regulates ciliary localization of the BBSome complex. Together with the BBSome complex, controls SMO ciliary trafficking and contributes to the sonic hedgehog (SHH) pathway regulation. May play a role in neurite outgrowth. May have tumor suppressor function. The chain is Leucine zipper transcription factor-like protein 1 (LZTFL1) from Homo sapiens (Human).